A 148-amino-acid chain; its full sequence is Snaclec crotocetin (148 aa).

The signal sequence occupies residues 1–23; it reads MGRLVFVSFGLLVVFLSLTGTGA. Disulfide bonds link Cys27–Cys38, Cys55–Cys144, and Cys121–Cys136. Residues 34–145 enclose the C-type lectin domain; sequence YEGHCYKVFK…CSKTHKVVCK (112 aa).

It belongs to the snaclec family. As to quaternary structure, heterodimer; disulfide-linked. As to expression, expressed by the venom gland.

It is found in the secreted. Functionally, interferes with one step of hemostasis (modulation of platelet aggregation, or coagulation cascade, for example). The protein is Snaclec crotocetin of Crotalus durissus terrificus (South American rattlesnake).